Reading from the N-terminus, the 221-residue chain is Ribosomal RNA small subunit methyltransferase Nep1 (221 aa).

S-adenosyl-L-methionine-binding positions include G174, G179, and 196–201 (LGEVAM).

This sequence belongs to the class IV-like SAM-binding methyltransferase superfamily. RNA methyltransferase NEP1 family. In terms of assembly, homodimer.

It carries out the reaction a pseudouridine in rRNA + S-adenosyl-L-methionine = an N(1)-methylpseudouridine in rRNA + S-adenosyl-L-homocysteine + H(+). Functionally, methyltransferase involved in ribosomal biogenesis. Specifically catalyzes the N1-methylation of the pseudouridine corresponding to position 914 in M.jannaschii 16S rRNA. This Pyrobaculum arsenaticum (strain DSM 13514 / JCM 11321 / PZ6) protein is Ribosomal RNA small subunit methyltransferase Nep1.